A 159-amino-acid chain; its full sequence is uncharacterized protein (159 aa).

A run of 4 helical transmembrane segments spans residues 5-27 (TLDLILGIIMGIVTVRATMRGFV), 34-51 (ASILCAAVVAILCHKRLV), 61-83 (SILLPCITFLITFMGVYCVMLFL), and 103-125 (FGFFFGIIEGSVLLTVILLLLHV).

It is found in the cell membrane. This is an uncharacterized protein from Treponema pallidum (strain Nichols).